The following is a 276-amino-acid chain: AT-hook motif nuclear-localized protein 17 (276 aa).

The span at 1-10 shows a compositional bias: basic and acidic residues; the sequence is MKGEYREQKS. 2 disordered regions span residues 1–80 and 212–248; these read MKGE…RDTD and AEEE…SGGE. Composition is skewed to low complexity over residues 20-31 and 40-49; these read HQQQQQQQQQQH and SSTVTPTVDD. The a.T hook DNA-binding region spans 56–68; that stretch reads RRPRGRPPGSKNK. The region spanning 80–230 is the PPC domain; the sequence is DPPMSPYILE…GTGEREGQSP (151 aa). The span at 212–227 shows a compositional bias: basic and acidic residues; it reads AEEEQKHSAGTGEREG. Positions 233–248 are enriched in gly residues; that stretch reads SGGGEESGQMAGSGGE.

It is found in the nucleus. Transcription factor that specifically binds AT-rich DNA sequences related to the nuclear matrix attachment regions (MARs). The protein is AT-hook motif nuclear-localized protein 17 of Arabidopsis thaliana (Mouse-ear cress).